The following is a 230-amino-acid chain: MSENKQLMKNGMWSNNPALVQLLGLCPLLAVSSTITNALGLGIATLLVLVGSNVTVSLIRNYVPKEIRIPVFVMIIASLVTCVQLLMNAYAYGLYLSLGIFIPLIVTNCIIIGRAEAYASKNDVLPAALDGLWMGLGMTSVLVVLGSMRELIGNGTLFDGADLLLGDWAAALRIQVFQFDSSFLLALLPPGAFIGVGLLIALKNVIDSSIQARQPKEEKPAIERARVTNA.

The next 6 helical transmembrane spans lie at 18 to 38 (ALVQ…ITNA), 39 to 59 (LGLG…VSLI), 69 to 89 (IPVF…LMNA), 93 to 113 (GLYL…IIIG), 124 to 144 (VLPA…VLVV), and 182 to 202 (SFLL…LIAL).

This sequence belongs to the NqrDE/RnfAE family. In terms of assembly, the complex is composed of six subunits: RnfA, RnfB, RnfC, RnfD, RnfE and RnfG.

It is found in the cell inner membrane. Part of a membrane-bound complex that couples electron transfer with translocation of ions across the membrane. This is Ion-translocating oxidoreductase complex subunit E from Vibrio parahaemolyticus serotype O3:K6 (strain RIMD 2210633).